Consider the following 132-residue polypeptide: Small ribosomal subunit protein uS8 (132 aa).

It belongs to the universal ribosomal protein uS8 family. In terms of assembly, part of the 30S ribosomal subunit. Contacts proteins S5 and S12.

Its function is as follows. One of the primary rRNA binding proteins, it binds directly to 16S rRNA central domain where it helps coordinate assembly of the platform of the 30S subunit. The chain is Small ribosomal subunit protein uS8 from Rubrobacter xylanophilus (strain DSM 9941 / JCM 11954 / NBRC 16129 / PRD-1).